A 366-amino-acid polypeptide reads, in one-letter code: 5-amino-6-(D-ribitylamino)uracil--L-tyrosine 4-hydroxyphenyl transferase (366 aa).

Positions 51-290 (RCGNAITWVK…MIAISRLFLD (240 aa)) constitute a Radical SAM core domain. Positions 70, 74, and 77 each coordinate [4Fe-4S] cluster.

Belongs to the radical SAM superfamily. CofH family. In terms of assembly, consists of two subunits, CofG and CofH. [4Fe-4S] cluster is required as a cofactor.

It catalyses the reaction 5-amino-6-(D-ribitylamino)uracil + L-tyrosine + S-adenosyl-L-methionine = 5-amino-5-(4-hydroxybenzyl)-6-(D-ribitylimino)-5,6-dihydrouracil + 2-iminoacetate + 5'-deoxyadenosine + L-methionine + H(+). It participates in cofactor biosynthesis; coenzyme F0 biosynthesis. Its function is as follows. Catalyzes the radical-mediated synthesis of 5-amino-5-(4-hydroxybenzyl)-6-(D-ribitylimino)-5,6-dihydrouracil from 5-amino-6-(D-ribitylamino)uracil and L-tyrosine. The chain is 5-amino-6-(D-ribitylamino)uracil--L-tyrosine 4-hydroxyphenyl transferase from Methanospirillum hungatei JF-1 (strain ATCC 27890 / DSM 864 / NBRC 100397 / JF-1).